We begin with the raw amino-acid sequence, 516 residues long: Cytochrome P450 1A2 (516 aa).

A glycan (O-linked (GlcNAc) serine) is linked at Ser69. Substrate is bound by residues Phe226 and 361 to 365; that span reads DRPQL. Cys458 provides a ligand contact to heme.

Belongs to the cytochrome P450 family. In terms of assembly, interacts with PGRMC1; the interaction requires PGRMC1 homodimerization. Heme serves as cofactor.

Its subcellular location is the endoplasmic reticulum membrane. The protein localises to the microsome membrane. The enzyme catalyses an organic molecule + reduced [NADPH--hemoprotein reductase] + O2 = an alcohol + oxidized [NADPH--hemoprotein reductase] + H2O + H(+). The catalysed reaction is 17beta-estradiol + reduced [NADPH--hemoprotein reductase] + O2 = 2-hydroxy-17beta-estradiol + oxidized [NADPH--hemoprotein reductase] + H2O + H(+). It carries out the reaction 17beta-estradiol + reduced [NADPH--hemoprotein reductase] + O2 = 4-hydroxy-17beta-estradiol + oxidized [NADPH--hemoprotein reductase] + H2O + H(+). It catalyses the reaction estrone + reduced [NADPH--hemoprotein reductase] + O2 = 2-hydroxyestrone + oxidized [NADPH--hemoprotein reductase] + H2O + H(+). The enzyme catalyses estrone + reduced [NADPH--hemoprotein reductase] + O2 = 4-hydroxyestrone + oxidized [NADPH--hemoprotein reductase] + H2O + H(+). The catalysed reaction is cholesterol + reduced [NADPH--hemoprotein reductase] + O2 = 25-hydroxycholesterol + oxidized [NADPH--hemoprotein reductase] + H2O + H(+). It carries out the reaction all-trans-retinol + reduced [NADPH--hemoprotein reductase] + O2 = all-trans-retinal + oxidized [NADPH--hemoprotein reductase] + 2 H2O + H(+). It catalyses the reaction all-trans-retinal + reduced [NADPH--hemoprotein reductase] + O2 = all-trans-retinoate + oxidized [NADPH--hemoprotein reductase] + H2O + 2 H(+). The enzyme catalyses (5Z,8Z,11Z,14Z)-eicosatetraenoate + reduced [NADPH--hemoprotein reductase] + O2 = (14R,15S)-epoxy-(5Z,8Z,11Z)-eicosatrienoate + oxidized [NADPH--hemoprotein reductase] + H2O + H(+). The catalysed reaction is (5Z,8Z,11Z,14Z)-eicosatetraenoate + reduced [NADPH--hemoprotein reductase] + O2 = (14S,15R)-epoxy-(5Z,8Z,11Z)-eicosatrienoate + oxidized [NADPH--hemoprotein reductase] + H2O + H(+). It carries out the reaction (5Z,8Z,11Z,14Z,17Z)-eicosapentaenoate + reduced [NADPH--hemoprotein reductase] + O2 = (17R,18S)-epoxy-(5Z,8Z,11Z,14Z)-eicosatetraenoate + oxidized [NADPH--hemoprotein reductase] + H2O + H(+). It catalyses the reaction (4Z,7Z,10Z,13Z,16Z,19Z)-docosahexaenoate + reduced [NADPH--hemoprotein reductase] + O2 = (19R,20S)-epoxy-(4Z,7Z,10Z,13Z,16Z)-docosapentaenoate + oxidized [NADPH--hemoprotein reductase] + H2O + H(+). The enzyme catalyses (5S)-hydroperoxy-(6E,8Z,11Z,14Z)-eicosatetraenoate = 5-oxo-(6E,8Z,11Z,14Z)-eicosatetraenoate + H2O. The catalysed reaction is (12S)-hydroperoxy-(5Z,8Z,10E,14Z)-eicosatetraenoate = 12-oxo-(5Z,8Z,10E,14Z)-eicosatetraenoate + H2O. It carries out the reaction (15S)-hydroperoxy-(5Z,8Z,11Z,13E)-eicosatetraenoate = 15-oxo-(5Z,8Z,11Z,13E)-eicosatetraenoate + H2O. It catalyses the reaction (13S)-hydroperoxy-(9Z,11E)-octadecadienoate = 13-oxo-(9Z,11E)-octadecadienoate + H2O. The enzyme catalyses (5Z,8Z,11Z,14Z)-eicosatetraenoate + reduced [NADPH--hemoprotein reductase] + O2 = 13-hydroxy-(5Z,8Z,11Z,14Z)-eicosatetraenoate + oxidized [NADPH--hemoprotein reductase] + H2O + H(+). The catalysed reaction is (5Z,8Z,11Z,14Z)-eicosatetraenoate + reduced [NADPH--hemoprotein reductase] + O2 = 19-hydroxy-(5Z,8Z,11Z,14Z)-eicosatetraenoate + oxidized [NADPH--hemoprotein reductase] + H2O + H(+). It carries out the reaction (9Z,12Z)-octadecadienoate + reduced [NADPH--hemoprotein reductase] + O2 = 11-hydroxy-(9Z,12Z)-octadecadienoate + oxidized [NADPH--hemoprotein reductase] + H2O + H(+). It functions in the pathway cofactor metabolism; retinol metabolism. The protein operates within steroid metabolism; cholesterol metabolism. It participates in lipid metabolism; arachidonate metabolism. Functionally, a cytochrome P450 monooxygenase involved in the metabolism of various endogenous substrates, including fatty acids, steroid hormones and vitamins. Mechanistically, uses molecular oxygen inserting one oxygen atom into a substrate, and reducing the second into a water molecule, with two electrons provided by NADPH via cytochrome P450 reductase (NADPH--hemoprotein reductase). Catalyzes the hydroxylation of carbon-hydrogen bonds. Exhibits high catalytic activity for the formation of hydroxyestrogens from estrone (E1) and 17beta-estradiol (E2), namely 2-hydroxy E1 and E2. Metabolizes cholesterol toward 25-hydroxycholesterol, a physiological regulator of cellular cholesterol homeostasis. May act as a major enzyme for all-trans retinoic acid biosynthesis in the liver. Catalyzes two successive oxidative transformation of all-trans retinol to all-trans retinal and then to the active form all-trans retinoic acid. Primarily catalyzes stereoselective epoxidation of the last double bond of polyunsaturated fatty acids (PUFA), displaying a strong preference for the (R,S) stereoisomer. Catalyzes bisallylic hydroxylation and omega-1 hydroxylation of PUFA. May also participate in eicosanoids metabolism by converting hydroperoxide species into oxo metabolites (lipoxygenase-like reaction, NADPH-independent). Plays a role in the oxidative metabolism of xenobiotics. Catalyzes the N-hydroxylation of heterocyclic amines and the O-deethylation of phenacetin. Metabolizes caffeine via N3-demethylation. The protein is Cytochrome P450 1A2 (CYP1A2) of Oryctolagus cuniculus (Rabbit).